The chain runs to 381 residues: Tumor necrosis factor receptor superfamily member 10B (381 aa).

The first 52 residues, 1 to 52 (MEPPGPSTPTASAAARADHYTPGLRPLPKRRLLYSFALLLAVLQAVFVPVTA), serve as a signal peptide directing secretion. 3 TNFR-Cys repeats span residues 26–86 (PLPK…GNCK), 87–129 (PCRE…NTVC), and 130–169 (RCKP…NRKC). Residues 53–180 (NPAHNRPAGL…SKTAWASWHK (128 aa)) are Extracellular-facing. 7 disulfides stabilise this stretch: cysteine 74-cysteine 85, cysteine 88-cysteine 105, cysteine 108-cysteine 121, cysteine 111-cysteine 129, cysteine 131-cysteine 145, cysteine 148-cysteine 161, and cysteine 151-cysteine 169. The chain crosses the membrane as a helical span at residues 181-201 (LGLWIGLLVPVVLLIGALLVW). At 202–381 (KTGAWRQWLL…ETGPGGSQCV (180 aa)) the chain is on the cytoplasmic side. Residues 228–260 (HSSLLDRQTSSTTNDSNHNTEPGKTQKTGKKLL) form a disordered region. Over residues 236–247 (TSSTTNDSNHNT) the composition is skewed to low complexity. The 84-residue stretch at 273–356 (KFIFEYCSDI…DAMEKIEDYA (84 aa)) folds into the Death domain. A (Microbial infection) N-beta-linked (GlcNAc) arginine glycan is attached at arginine 293.

Monomer. Can interact with TRADD and RIPK1. Three TNFRSF10B molecules interact with the TNFSF10 homotrimer. In the absence of stimulation, interacts with BIRC2, DDX3X and GSK3B. The interaction with BIRC2 and DDX3X is further enhanced upon receptor stimulation and accompanied by DDX3X and BIRC2 cleavage. In terms of processing, (Microbial infection) Glycosylated at Arg-293 by S.typhimurium protein Ssek3. As to expression, highly expressed in heart, lung and kidney.

It localises to the membrane. Receptor for the cytotoxic ligand TNFSF10/TRAIL. The adapter molecule FADD recruits caspase-8 to the activated receptor. The resulting death-inducing signaling complex (DISC) performs caspase-8 proteolytic activation which initiates the subsequent cascade of caspases (aspartate-specific cysteine proteases) mediating apoptosis. Promotes the activation of NF-kappa-B. Essential for ER stress-induced apoptosis. The chain is Tumor necrosis factor receptor superfamily member 10B (Tnfrsf10b) from Mus musculus (Mouse).